A 240-amino-acid chain; its full sequence is Rho GDP-dissociation inhibitor 1 (240 aa).

Residues 1–66 (MSLVSGARDM…DDDSKLQLGP (66 aa)) form a disordered region.

This sequence belongs to the Rho GDI family. As to quaternary structure, interacts with RAC-like GTP binding proteins ARAC5/ROP4 and ARAC3/ROP6.

It is found in the cytoplasm. Functionally, regulates the GDP/GTP exchange reaction of the Rho proteins by inhibiting the dissociation of GDP from them, and the subsequent binding of GTP to them. The sequence is that of Rho GDP-dissociation inhibitor 1 (GDI1) from Arabidopsis thaliana (Mouse-ear cress).